Here is a 292-residue protein sequence, read N- to C-terminus: Elongation factor Ts (292 aa).

The interval Thr80–Val83 is involved in Mg(2+) ion dislocation from EF-Tu.

This sequence belongs to the EF-Ts family.

Its subcellular location is the cytoplasm. Functionally, associates with the EF-Tu.GDP complex and induces the exchange of GDP to GTP. It remains bound to the aminoacyl-tRNA.EF-Tu.GTP complex up to the GTP hydrolysis stage on the ribosome. This Cupriavidus metallidurans (strain ATCC 43123 / DSM 2839 / NBRC 102507 / CH34) (Ralstonia metallidurans) protein is Elongation factor Ts.